The sequence spans 89 residues: Small ribosomal subunit protein uS14 (89 aa).

The protein belongs to the universal ribosomal protein uS14 family. As to quaternary structure, part of the 30S ribosomal subunit. Contacts proteins S3 and S10.

Its function is as follows. Binds 16S rRNA, required for the assembly of 30S particles and may also be responsible for determining the conformation of the 16S rRNA at the A site. This Azobacteroides pseudotrichonymphae genomovar. CFP2 protein is Small ribosomal subunit protein uS14.